The following is a 223-amino-acid chain: Ribose-5-phosphate isomerase A (223 aa).

Residues 26–29, 82–85, and 95–98 contribute to the substrate site; these read TGST, DGAD, and KGGG. Residue Glu-104 is the Proton acceptor of the active site. Residue Lys-122 coordinates substrate.

The protein belongs to the ribose 5-phosphate isomerase family. In terms of assembly, homodimer.

The enzyme catalyses aldehydo-D-ribose 5-phosphate = D-ribulose 5-phosphate. It participates in carbohydrate degradation; pentose phosphate pathway; D-ribose 5-phosphate from D-ribulose 5-phosphate (non-oxidative stage): step 1/1. Functionally, catalyzes the reversible conversion of ribose-5-phosphate to ribulose 5-phosphate. This chain is Ribose-5-phosphate isomerase A, found in Streptococcus agalactiae serotype III (strain NEM316).